The primary structure comprises 427 residues: Beta-1,3-galactosyl-O-glycosyl-glycoprotein beta-1,6-N-acetylglucosaminyltransferase (427 aa).

Over 1–9 (MLRKLWRRK) the chain is Cytoplasmic. The mediates interaction with GOLPH3 and is necessary and sufficient for localization to the Golgi stretch occupies residues 5–9 (LWRRK). A helical; Signal-anchor for type II membrane protein transmembrane segment spans residues 10–32 (LFSFPTKYYFLFLAFSVVTFTVL). Residues 33–121 (RIHQKTEFVN…EPLSKEEAGF (89 aa)) form a stem region region. The Lumenal segment spans residues 33-427 (RIHQKTEFVN…RHKALETLKP (395 aa)). Asn-58 and Asn-95 each carry an N-linked (GlcNAc...) asparagine glycan. Intrachain disulfides connect Cys-59–Cys-412, Cys-100–Cys-172, Cys-151–Cys-199, and Cys-372–Cys-380. The tract at residues 122–427 (PIAYSIVVHH…RHKALETLKP (306 aa)) is catalytic. Residues 128 to 130 (VVH), 155 to 157 (DAK), and Tyr-187 each bind UDP-N-acetyl-alpha-D-glucosamine. A glycoprotein contacts are provided by Glu-243, Lys-251, Arg-254, Glu-320, Lys-341, and Tyr-358. The Nucleophile role is filled by Glu-320. 2 residues coordinate UDP-N-acetyl-alpha-D-glucosamine: Arg-377 and Lys-400.

It belongs to the glycosyltransferase 14 family. As to quaternary structure, interacts with GOLPH3; may control GCNT1 retention in the Golgi. In terms of tissue distribution, expressed in tracheal submucosal glands and epithelium (at protein level).

The protein localises to the golgi apparatus membrane. It catalyses the reaction a 3-O-[beta-D-galactosyl-(1-&gt;3)-N-acetyl-alpha-D-galactosaminyl]-L-seryl-[protein] + UDP-N-acetyl-alpha-D-glucosamine = 3-O-{beta-D-galactosyl-(1-&gt;3)-[N-acetyl-beta-D-glucosaminyl-(1-&gt;6)]-N-acetyl-alpha-D-galactosaminyl}-L-seryl-[protein] + UDP + H(+). The enzyme catalyses a 3-O-[beta-D-galactosyl-(1-&gt;3)-N-acetyl-alpha-D-galactosaminyl]-L-threonyl-[protein] + UDP-N-acetyl-alpha-D-glucosamine = a 3-O-{beta-D-galactosyl-(1-&gt;3)-[N-acetyl-beta-D-glucosaminyl-(1-&gt;6)]-N-acetyl-alpha-D-galactosaminyl}-L-threonyl-[protein] + UDP + H(+). It carries out the reaction a globoside GalGb4Cer + UDP-N-acetyl-alpha-D-glucosamine = a globoside GlcNAc-(beta1-&gt;6)-GalGb4Cer + UDP + H(+). The catalysed reaction is a ganglioside GA1 + UDP-N-acetyl-alpha-D-glucosamine = a ganglioside beta-D-GlcNAc-(1-&gt;6)-GA1 + UDP + H(+). It participates in protein modification; protein glycosylation. The protein operates within glycolipid biosynthesis. Glycosyltransferase that catalyzes the transfer of an N-acetylglucosamine (GlcNAc) moiety in beta1-6 linkage from UDP-GlcNAc onto mucin-type core 1 O-glycan to form the branched mucin-type core 2 O-glycan. The catalysis is metal ion-independent and occurs with inversion of the anomeric configuration of sugar donor. Selectively involved in synthesis of mucin-type core 2 O-glycans that serve as scaffolds for the display of selectin ligand sialyl Lewis X epitope by myeloid cells, with an impact on homeostasis and recruitment to inflammatory sites. Can also act on glycolipid substrates. Transfers GlcNAc moiety to GalGb4Cer globosides in a reaction step to the synthesis of stage-specific embryonic antigen 1 (SSEA-1) determinant. Can use Galbeta1-3GalNAcalpha1- and Galbeta1-3GalNAcbeta1- oligosaccharide derivatives as acceptor substrates. The protein is Beta-1,3-galactosyl-O-glycosyl-glycoprotein beta-1,6-N-acetylglucosaminyltransferase (GCNT1) of Bos taurus (Bovine).